Consider the following 402-residue polypeptide: E3 ubiquitin-protein ligase MARCHF11 (402 aa).

Gly residues predominate over residues 1–11 (MSFEGGHGGSR). A disordered region spans residues 1-161 (MSFEGGHGGS…SGGGDQRAGH (161 aa)). Residues 21–56 (EPPPQPPPPPPPTPPPGEPAPVPAAPRYLPPLPASP) show a composition bias toward pro residues. Residues 111-124 (EAAAAKGGPGESEA) show a composition bias toward low complexity. An RING-CH-type zinc finger spans residues 162–222 (QHQHHQPICK…ELCCYRYHVI (61 aa)). Residues Cys-170, Cys-173, Cys-186, Cys-188, His-196, Cys-199, Cys-212, and Cys-215 each coordinate Zn(2+). The next 2 membrane-spanning stretches (helical) occupy residues 245 to 265 (MIAV…LLWS) and 278 to 298 (ILFQ…IGLI). Positions 371-374 (YVLL) match the YXXL motif motif. The short motif at 399–402 (VTSV) is the PDZ-binding element.

As to quaternary structure, interacts (YXXL motif) with AP1M1. Interacts (via PDZ-binding motif) with LIN7A. Interacts with unidentified fucose glycoproteins.

Its subcellular location is the cytoplasmic vesicle membrane. The enzyme catalyses S-ubiquitinyl-[E2 ubiquitin-conjugating enzyme]-L-cysteine + [acceptor protein]-L-lysine = [E2 ubiquitin-conjugating enzyme]-L-cysteine + N(6)-ubiquitinyl-[acceptor protein]-L-lysine.. The protein operates within protein modification; protein ubiquitination. E3 ubiquitin-protein ligase that mediates polyubiquitination of CD4. E3 ubiquitin ligases accept ubiquitin from an E2 ubiquitin-conjugating enzyme in the form of a thioester and then directly transfer the ubiquitin to targeted substrates. May play a role in ubuquitin-dependent protein sorting in developmenting spermatids. This is E3 ubiquitin-protein ligase MARCHF11 from Homo sapiens (Human).